Here is a 286-residue protein sequence, read N- to C-terminus: Putative WUSCHEL-related homeobox 2 (286 aa).

Positions 1–25 (MAPAVQQQQSGGGGGSTGAAAVGST) are disordered. The homeobox; WUS-type DNA-binding region spans 23–87 (GSTTRWCPTP…NHKARDRQKL (65 aa)).

Belongs to the WUS homeobox family.

The protein resides in the nucleus. In terms of biological role, transcription factor which may be involved in developmental processes. The polypeptide is Putative WUSCHEL-related homeobox 2 (WOX2) (Oryza sativa subsp. japonica (Rice)).